A 1560-amino-acid chain; its full sequence is MGLWGMLAFPLGFLLASVLLVASAPATPESPGCSNKEQQVTVSHTYKIDVPKSALVQVETDPQSLSDDGTSLLAPGEDGEEQNIIFRHNIRLQTPQKNCDLADSVQDLLARMKKLEEEMAELKEQCNTNRCCQGAADLSRHCSGHGTFLPETCSCHCDQGWEGADCDQPTCPGACNGHGRCVDGQCVCDAPYVGVDCAYAACPQDCSGHGVCVQGVCQCHEDFTAEDCSEQRCPGDCSGNGFCDTGECYCEMGFTGPDCSQVVAPQGLQLLKSTENSLLVSWEPSSEVDYYLLSYYPLGKEQATKQVRVPKEQHTYDITGLLPGTKYIVTLRNVKKDISSSPQHLLATTDLAVVGTAWVNEETETSLDVEWENPLTEVDYYKLRYGPLTGQEVTEVTVPKSRDPKSRYDITGLQPGTEYKITVVPIRGDLEGKPILLNGRTEIDGPTNVVTNQVTEDTASVSWDPVRADIDKYVVRYIAPDGETKEKAVPKDQSSTVLTGLKPGEAYKVFVWAERGNQGSKKADTKALTEIDSPENLVTDRVTENSLSVSWDPVEADIDRYVVSYTSVDGETKQVPVKKDQRSTVLTGLSPGVEYKVYVWAEKGDRESKKANTKAPTDIDSPKNLVTDQVTENTLSVSWDPVQANIDRYMVSYTSADGETREVPVPKEKSSTVLTGLRPGVEYKVHVWAQKGTQESRKANTKAPTDIDGPKNLVTDQVTETTLSVSWDPVEADIDRYMVRYTSPDGETKEVPVSKDKSSTVLRGLRPGVEYKVDVWAQKGAQDSRKANTKAPTDIDSPKNLVTEQVTESTATVSWDPVEADIDRYVVRYTSVDGETREFLVGKDQTSTVLTGMRPGVEYQVDVWAQKGTQESRKTSTKAPTDIDGPKNLVTDQVTETTLSVSWDPVEADIDRYMVRYTSPDGETKEVPVSKDKSSTVLRGLRPGVEYKVDVWAQKGAQDSRKANTKAPTDIDSPKNLAIDQVTETTLSVSWDPVQADIDRYVVRYTSADGESKEFLIGKEQRSTVLTGLRPGVEYKVEVWAQKGARESKKANTEGHTDIDSPKNLVTNQVTENTATISWDPVQADIDRYMVRYTSADGETREIPVRKEKSSTVLTGLRPGVEYTVQVWAQKGARESKKAKTKAPTEIDSPKNLVTNRVTENTATISWDPVRANIDRYMVRYTSADGETKEIPVSKDQSSTILTGLKPGMEYTIHVWAQKGARESKKADTKALTEIDPPRNLRPFGVTHSGGVLTWLPPSAQIDGYILTYQFPNGTVKEVELPRGQQRFELQDLEQGVTYPVSLVAFKGNQRSRTVSTTLSTVDARFPHPSDCSQVQQNTNAASGLYTIYLNGDASRPMQVYCDMDTDGGGWIVFQRRNTGQLDFFKRWRSYVEGFGDPMKEFWLGLDKLHNLTTGTTTRYEVRADLQTFNESAYAVYDFFQVASSKERYKLSVGKYRGTAGDALTYHNGWKFTTFDRDNDIALSNCALTHHGGWWYKNCHLANPNGKYGETKHSEGVNWEPWKGHEFSIPYVELKIRPFGYSRDRFSGRKKRSIGKARMF.

Positions 1 to 26 (MGLWGMLAFPLGFLLASVLLVASAPA) are cleaved as a signal peptide. 3 consecutive EGF-like domains span residues 167–198 (DQPTCPGACNGHGRCVDGQCVCDAPYVGVDCA), 199–229 (YAACPQDCSGHGVCVQGVCQCHEDFTAEDCS), and 230–260 (EQRCPGDCSGNGFCDTGECYCEMGFTGPDCS). Disulfide bonds link Cys-171–Cys-181, Cys-175–Cys-186, Cys-188–Cys-197, Cys-202–Cys-212, Cys-206–Cys-217, Cys-219–Cys-228, Cys-233–Cys-243, Cys-237–Cys-248, and Cys-250–Cys-259. 12 Fibronectin type-III domains span residues 264 to 353 (APQG…DLAV), 354 to 444 (VGTA…TEID), 445 to 532 (GPTN…TEID), 533 to 622 (SPEN…IDSP), 623 to 706 (KNLV…APTD), 709 to 798 (GPKN…IDSP), 799 to 882 (KNLV…APTD), 885 to 970 (GPKN…APTD), 973 to 1062 (SPKN…IDSP), 1063 to 1144 (KNLV…TKAP), 1149 to 1238 (SPKN…IDPP), and 1239 to 1325 (RNLR…VDAR). 2 disordered regions span residues 868 to 888 (GTQESRKTSTKAPTDIDGPKN) and 1044 to 1063 (GARESKKANTEGHTDIDSPK). The segment covering 1044–1061 (GARESKKANTEGHTDIDS) has biased composition (basic and acidic residues). A Fibrinogen C-terminal domain is found at 1323-1540 (DARFPHPSDC…YVELKIRPFG (218 aa)). N-linked (GlcNAc...) asparagine glycosylation occurs at Asn-1411.

The protein belongs to the tenascin family. Homohexamer. As to expression, highest expression in kidney followed by spleen and brain. In brain, highest expression is found in hippocampus, cerebellum and olfactory bulb. Expressed in aortic valve, corneal limbus. Expressed in ribs periosteum. During a fracture repair process, expression increases in cells of newly formed perichondrium/peristeum surrounding the cartalaginous callus.

It localises to the secreted. The protein resides in the extracellular space. Its subcellular location is the extracellular matrix. In terms of biological role, extracellular matrix protein that seems to be a ligand for ITGA8:ITGB1, ITGAV:ITGB1 and ITGA4:ITGB1. Involved in neurite outgrowth and cell migration in hippocampal explants. During endochondral bone formation, inhibits proliferation and differentiation of proteoblasts mediated by canonical WNT signaling. In tumors, stimulates angiogenesis by elongation, migration and sprouting of endothelial cells. Expressed in most mammary tumors, may facilitate tumorigenesis by supporting the migratory behavior of breast cancer cells. This is Tenascin-N from Mus musculus (Mouse).